The following is a 134-amino-acid chain: Proline-rich protein 4 (134 aa).

Residues 1 to 16 (MLLVLLSVVLLALSSA) form the signal peptide. The tract at residues 28 to 134 (FTFTIPDVED…ARHPQEQPLW (107 aa)) is disordered. The segment covering 47–59 (QRPPPEGLLPRPP) has biased composition (pro residues). Residues 110-119 (VSLQEASSFF) are compositionally biased toward polar residues. Basic and acidic residues predominate over residues 120-134 (QRDRPARHPQEQPLW).

In terms of tissue distribution, abundantly expressed in lacrimal gland where it is found in the acinar cells but not in the intralobular ducts. Also found in the submandibular gland, the parotid and sublingual glands.

It is found in the secreted. The protein is Proline-rich protein 4 (PRR4) of Homo sapiens (Human).